The following is a 258-amino-acid chain: Phosphate import ATP-binding protein PstB (258 aa).

In terms of domain architecture, ABC transporter spans Leu-12–Ile-253. An ATP-binding site is contributed by Gly-44–Ser-51.

The protein belongs to the ABC transporter superfamily. Phosphate importer (TC 3.A.1.7) family. As to quaternary structure, the complex is composed of two ATP-binding proteins (PstB), two transmembrane proteins (PstC and PstA) and a solute-binding protein (PstS).

It localises to the cell inner membrane. The enzyme catalyses phosphate(out) + ATP + H2O = ADP + 2 phosphate(in) + H(+). Its function is as follows. Part of the ABC transporter complex PstSACB involved in phosphate import. Responsible for energy coupling to the transport system. The polypeptide is Phosphate import ATP-binding protein PstB (Bordetella parapertussis (strain 12822 / ATCC BAA-587 / NCTC 13253)).